The chain runs to 257 residues: UPF0246 protein CLL_A2361 (257 aa).

It belongs to the UPF0246 family.

The protein is UPF0246 protein CLL_A2361 of Clostridium botulinum (strain Eklund 17B / Type B).